The following is a 325-amino-acid chain: Probable NADH kinase (325 aa).

It belongs to the NAD kinase family. In terms of assembly, homodimer.

It localises to the cytoplasm. It catalyses the reaction NADH + ATP = ADP + NADPH + H(+). Key source of the cellular reductant NADPH which is an important antioxidant factor. This is Probable NADH kinase from Oryza sativa subsp. japonica (Rice).